A 485-amino-acid polypeptide reads, in one-letter code: Zinc finger protein 639 (485 aa).

Residues 1–14 (MNEYPKKRKRKTLH) are compositionally biased toward basic residues. 2 disordered regions span residues 1-23 (MNEY…DSSG) and 54-80 (DNKD…ARNR). The residue at position 60 (serine 60) is a Phosphoserine. Lysine 76 is covalently cross-linked (Glycyl lysine isopeptide (Lys-Gly) (interchain with G-Cter in SUMO2)). Serine 88 carries the phosphoserine modification. The segment at 115–136 (ASPESVHQHTQEESPIEVHTSE) is disordered. Glycyl lysine isopeptide (Lys-Gly) (interchain with G-Cter in SUMO2) cross-links involve residues lysine 177, lysine 181, and lysine 226. 8 C2H2-type zinc fingers span residues 204 to 227 (YKCE…ILKH), 233 to 255 (NVCR…AKLH), 260 to 283 (YICK…ADTH), 289 to 311 (YWCE…FQEH), 374 to 397 (FVCQ…AIEH), 403 to 425 (HVCD…LNSH), 431 to 454 (YLCQ…DFKH), and 460 to 482 (HKCS…LQVH). The interaction with CTNNA2 stretch occupies residues 371 to 455 (KNFFVCQVCG…LKIHLDFKHS (85 aa)).

Belongs to the krueppel C2H2-type zinc-finger protein family. In terms of assembly, interacts with CTNNA2.

It localises to the nucleus. In terms of biological role, binds DNA and may function as a transcriptional repressor. The protein is Zinc finger protein 639 (Znf639) of Mus musculus (Mouse).